The following is a 250-amino-acid chain: Probable S-methyl-5'-thioinosine phosphorylase (250 aa).

Residues threonine 14 and 56-57 each bind phosphate; that span reads RH. Methionine 189 lines the substrate pocket. Threonine 190 lines the phosphate pocket. 213–215 is a substrate binding site; the sequence is NWA.

It belongs to the PNP/MTAP phosphorylase family. MTAP subfamily. As to quaternary structure, homotrimer.

The catalysed reaction is S-methyl-5'-thioinosine + phosphate = 5-(methylsulfanyl)-alpha-D-ribose 1-phosphate + hypoxanthine. The protein operates within purine metabolism; purine nucleoside salvage. Its function is as follows. Catalyzes the reversible phosphorylation of S-methyl-5'-thioinosine (MTI) to hypoxanthine and 5-methylthioribose-1-phosphate. Involved in the breakdown of S-methyl-5'-thioadenosine (MTA), a major by-product of polyamine biosynthesis. Catabolism of (MTA) occurs via deamination to MTI and phosphorolysis to hypoxanthine. The polypeptide is Probable S-methyl-5'-thioinosine phosphorylase (Xanthomonas campestris pv. campestris (strain ATCC 33913 / DSM 3586 / NCPPB 528 / LMG 568 / P 25)).